Consider the following 312-residue polypeptide: Olfactory receptor 8G50 (312 aa).

Topologically, residues 1–28 (MAYSNQSRVTEFIISGLTNKPELQLPLF) are extracellular. N5 is a glycosylation site (N-linked (GlcNAc...) asparagine). Residues 29 to 49 (LLFLGIYLFTVLGNLGMIILI) form a helical membrane-spanning segment. The Cytoplasmic segment spans residues 50 to 56 (LLSSHLH). Residues 57–77 (TPMYFFLSSLSFIDLCYSTII) traverse the membrane as a helical segment. At 78–99 (TPKMLVNFVTTKNVISYQECMT) the chain is on the extracellular side. C97 and C189 are disulfide-bonded. A helical membrane pass occupies residues 100–120 (QLYFFIAFVISECHMLAAMAY). Topologically, residues 121–143 (DRYVAICNPLLYNVTMSYQVCSW) are cytoplasmic. The helical transmembrane segment at 144–164 (MVGGVYGMGFIGAAIHTFCML) threads the bilayer. At 165–204 (RVVFCKDNIINHYFCDLFPLMELACSSTYVNEVVLLSLSA) the chain is on the extracellular side. Residues 205 to 225 (FNIFIPTLTILGSYIFIIISI) form a helical membrane-spanning segment. At 226 to 244 (LRIKSTEGRFKAFSTCSSH) the chain is on the cytoplasmic side. The helical transmembrane segment at 245-265 (FSAVSVFFGSLAFMYLQPFSV) threads the bilayer. The Extracellular segment spans residues 266-274 (SSKDKGKVS). Residues 275 to 292 (SVFYTTIVPMLNPMIYSL) traverse the membrane as a helical segment. The Cytoplasmic segment spans residues 293-312 (RNRDVKLALNKLFQKKKFHV).

It belongs to the G-protein coupled receptor 1 family.

Its subcellular location is the cell membrane. In terms of biological role, odorant receptor. In Mus musculus (Mouse), this protein is Olfactory receptor 8G50.